The chain runs to 481 residues: G-protein coupled receptor 37-like 1 (481 aa).

An N-terminal signal peptide occupies residues Met1 to Gly24. Topologically, residues Ala25–Met134 are extracellular. Disordered stretches follow at residues Leu30–Glu55 and Leu76–Thr107. Polar residues predominate over residues Thr95–Thr107. Asn105 is a glycosylation site (N-linked (GlcNAc...) asparagine). The helical transmembrane segment at Leu135–Val155 threads the bilayer. Topologically, residues Trp156–Ser167 are cytoplasmic. The chain crosses the membrane as a helical span at residues Ile168 to Ile188. The Extracellular portion of the chain corresponds to Phe189–Ala205. Residues Cys203 and Cys286 are joined by a disulfide bond. The helical transmembrane segment at Val206–Ile226 threads the bilayer. Over Asp227–Lys251 the chain is Cytoplasmic. A helical transmembrane segment spans residues Leu252–Leu272. Residues Ala273–Met310 are Extracellular-facing. The chain crosses the membrane as a helical span at residues Trp311–Val331. Over Thr332–Thr360 the chain is Cytoplasmic. The chain crosses the membrane as a helical span at residues Val361 to Val381. Residues Val382–Gly398 lie on the Extracellular side of the membrane. Residues Leu399 to Ile419 traverse the membrane as a helical segment. The Cytoplasmic segment spans residues Cys420–Cys481. Ser471 is subject to Phosphoserine. Thr479 is modified (phosphothreonine).

Belongs to the G-protein coupled receptor 1 family. In terms of assembly, interacts with the PTCH1 receptor. In terms of processing, undergoes metalloprotease-mediated cleavage which reduces its constitutive activity. Ubiquitinated. Highly expressed in brain.

It localises to the cell membrane. The protein localises to the cell projection. Its subcellular location is the cilium membrane. G-protein coupled receptor. Has been shown to bind the neuroprotective and glioprotective factor prosaposin (PSAP), leading to endocytosis followed by an ERK phosphorylation cascade. However, other studies have shown that prosaposin does not increase activity. It has been suggested that GPR37L1 is a constitutively active receptor which signals through the guanine nucleotide-binding protein G(s) subunit alpha. Participates in the regulation of postnatal cerebellar development by modulating the Shh pathway. Regulates baseline blood pressure in females and protects against cardiovascular stress in males. Mediates inhibition of astrocyte glutamate transporters and reduction in neuronal N-methyl-D-aspartate receptor activity. In Rattus norvegicus (Rat), this protein is G-protein coupled receptor 37-like 1 (Gpr37l1).